We begin with the raw amino-acid sequence, 741 residues long: Hemolysin (741 aa).

The signal sequence occupies residues 1–25 (MPKLNRCAIAIFTILSAISSPTLLA). Positions 26–157 (NINEPSGEAA…RSGFASPAPA (132 aa)) are excised as a propeptide. Disulfide bonds link C182-C200, C497-C511, and C537-C549. The Ricin B-type lectin domain maps to 484-575 (RPVNLQLASF…LTNVYSGESL (92 aa)). The interval 607–741 (NAQESSPILG…LVKGVQFDLN (135 aa)) is beta-prism domain.

This sequence belongs to the HlyA hemolysin family. As to quaternary structure, monomer. Homoheptamer. After binding to target membranes the protein assembles into a heptameric pre-pore complex. Proteolytic cleavage triggers a conformation change that is required for membrane insertion and pore formation. In terms of processing, proteolytical cleavage is required to convert the 80 kDa hemolysin precursor into the active 65 kDa hemolysin.

Its subcellular location is the secreted. The protein resides in the host cell membrane. Functionally, bacterial hemolysin that causes cytolysis by forming heptameric pores in target host membranes. This chain is Hemolysin (hlyA), found in Vibrio cholerae serotype O1 (strain ATCC 39315 / El Tor Inaba N16961).